A 381-amino-acid chain; its full sequence is MIISASTDYRAAAQRKLPPFLFHYIDGGAYAEYTLRRNVEDLSAIALRQRVLKNMSELSLETRLFDETLAMPVALAPVGLTGMYARRGEVQAARAAAAKGVPFTLSTVSVCPIEEVAPAIDRPMWFQLYVLKDRGFMRNALERAKAAGVTTLVFTVDMPVPGARYRDAHSGMSGPYAAPRRILQAMTHPAWAWDVGLLGKPHDLGNISAYRGNPTGLEDYIGWLGANFDPSIAWKDLEWIREFWDGPMVIKGILDPEDARDAVKFGADGIVVSNHGGRQLDGVLSSARALPAIADAVKGELAILADSGIRTGLDVVRMIALGADSVLLGRAFVYALAAAGEAGVRNLLELIEKEMRVAMVLTGAKSIGEISADSLVRELGA.

The FMN hydroxy acid dehydrogenase domain occupies 1 to 380 (MIISASTDYR…SADSLVRELG (380 aa)). Tyr-24 is a substrate binding site. 2 residues coordinate FMN: Ser-106 and Gln-127. Tyr-129 serves as a coordination point for substrate. An FMN-binding site is contributed by Thr-155. A substrate-binding site is contributed by Arg-164. Lys-251 contacts FMN. His-275 acts as the Proton acceptor in catalysis. Position 278 (Arg-278) interacts with substrate. 306–330 (DSGIRTGLDVVRMIALGADSVLLGR) serves as a coordination point for FMN.

Belongs to the FMN-dependent alpha-hydroxy acid dehydrogenase family. As to quaternary structure, homotetramer. FMN is required as a cofactor.

It is found in the cell inner membrane. The enzyme catalyses (S)-lactate + A = pyruvate + AH2. In terms of biological role, catalyzes the conversion of L-lactate to pyruvate. Is coupled to the respiratory chain. The polypeptide is L-lactate dehydrogenase (Pseudomonas aeruginosa (strain UCBPP-PA14)).